Reading from the N-terminus, the 262-residue chain is Zinc import ATP-binding protein ZnuC (262 aa).

An ABC transporter domain is found at 5–220; sequence VSLEQLCVEF…PSYIALFGNA (216 aa). 37-44 serves as a coordination point for ATP; that stretch reads GPNGAGKS. Residues 236-262 form a disordered region; sequence HHDLSGSPVSGDATSCSNHNHGHHHHD.

Belongs to the ABC transporter superfamily. Zinc importer (TC 3.A.1.15.5) family. The complex is composed of two ATP-binding proteins (ZnuC), two transmembrane proteins (ZnuB) and a solute-binding protein (ZnuA).

Its subcellular location is the cell inner membrane. The enzyme catalyses Zn(2+)(out) + ATP(in) + H2O(in) = Zn(2+)(in) + ADP(in) + phosphate(in) + H(+)(in). In terms of biological role, part of the ABC transporter complex ZnuABC involved in zinc import. Responsible for energy coupling to the transport system. The sequence is that of Zinc import ATP-binding protein ZnuC from Vibrio parahaemolyticus serotype O3:K6 (strain RIMD 2210633).